Here is a 253-residue protein sequence, read N- to C-terminus: 5-oxoprolinase subunit A (253 aa).

This sequence belongs to the LamB/PxpA family. In terms of assembly, forms a complex composed of PxpA, PxpB and PxpC.

The enzyme catalyses 5-oxo-L-proline + ATP + 2 H2O = L-glutamate + ADP + phosphate + H(+). In terms of biological role, catalyzes the cleavage of 5-oxoproline to form L-glutamate coupled to the hydrolysis of ATP to ADP and inorganic phosphate. This is 5-oxoprolinase subunit A from Bacillus cereus (strain ATCC 14579 / DSM 31 / CCUG 7414 / JCM 2152 / NBRC 15305 / NCIMB 9373 / NCTC 2599 / NRRL B-3711).